The primary structure comprises 256 residues: 5-oxoprolinase subunit A (256 aa).

Belongs to the LamB/PxpA family. In terms of assembly, forms a complex composed of PxpA, PxpB and PxpC.

It catalyses the reaction 5-oxo-L-proline + ATP + 2 H2O = L-glutamate + ADP + phosphate + H(+). Functionally, catalyzes the cleavage of 5-oxoproline to form L-glutamate coupled to the hydrolysis of ATP to ADP and inorganic phosphate. The polypeptide is 5-oxoprolinase subunit A (Azoarcus sp. (strain BH72)).